Here is a 1144-residue protein sequence, read N- to C-terminus: MANRPAASALAGARSPSERQEPREPEVAPPGGDHVFCRKVSGVMVLSSDPPGPAAYRISDSSFVQCGSNCSMIIDGDVARGHLRDLEGATSTGAFVAISNVAAGGDGRTAVVALGGTSGPSATTSVGTQTSGEFLHGNPRTPEPQGPQAVPPPPPPPFPWGHECCARRDARGGAEKDVGAAESWSDGPSSDSETEDSDSSDEDTGSGSETLSRSSSIWAAGATDDDDSDSDSRSDDSVQPDVVVRRRWSDGPAPVAFPKPRRPGDSPGNPGLGAGTGPGSATDPRASADSDSAAHAAAPQADVAPVLDSQPTVGTDPGYPVPLELTPENAEAVARFLGDAVDREPALMLEYFCRCAREESKRVPPRTFGSAPRLTEDDFGLLNYALAEMRRLCLDLPPVPPNAYTPYHLREYATRLVNGFKPLVRRSARLYRILGILVHLRIRTREASFEEWMRSKEVDLDFGLTERLREHEAQLMILAQALNPYDCLIHSTPNTLVERGLQSALKYEEFYLKRFGGHYMESVFQMYTRIAGFLACRATRGMRHIALGRQGSWWEMFKFFFHRLYDHQIVPSTPAMLNLGTRNYYTSSCYLVNPQATTNQATLRAITGNVSAILARNGGIGLCMQAFNDASPGTASIMPALKVLDSLVAAHNKQSTRPTGACVYLEPWHSDVRAVLRMKGVLAGEEAQRCDNIFSALWMPDLFFKRLIRHLDGEKNVTWSLFDRDTSMSLADFHGEEFEKLYEHLEAMGFGETIPIQDLAYAIVRSAATTGSPFIMFKDAVNRHYIYDTQGAAIAGSNLCTEIVHPSSKRSSGVCNLGSVNLARCVSRRTFDFGMLRDAVQACVLMVNIMIDSTLQPTPQCARGHDNLRSMGIGMQGLHTACLKMGLDLESAEFRDLNTHIAEVMLLAAMKTSNALCVRGARPFSHFKRSMYRAGRFHWERFSNASPRYEGEWEMLRQSMMKHGLRNSQFIALMPTAASAQISDVSEGFAPLFTNLFSKVTRDGETLRPNTLLLKELERTFGGKRLLDAMDGLEAKQWSVAQALPCLDPAHPLRRFKTAFDYDQELLIDLCADRAPYVDHSQSMTLYVTEKADGTLPASTLVRLLVHAYKRGLKTGMYYCKVRKATNSGVFAGDDNIVCTSCAL.

The segment at 1–33 (MANRPAASALAGARSPSERQEPREPEVAPPGGD) is disordered. The segment covering 16–26 (PSERQEPREPE) has biased composition (basic and acidic residues). Residues 55-75 (AYRISDSSFVQCGSNCSMIID) carry the RIP homotypic interaction motif (RHIM) motif. Residues 118-324 (SGPSATTSVG…TDPGYPVPLE (207 aa)) are disordered. Over residues 119 to 132 (GPSATTSVGTQTSG) the composition is skewed to polar residues. Residues 141-159 (TPEPQGPQAVPPPPPPPFP) show a composition bias toward pro residues. Residues 164-179 (CCARRDARGGAEKDVG) show a composition bias toward basic and acidic residues. The span at 192–204 (SETEDSDSSDEDT) shows a compositional bias: acidic residues. 2 stretches are compositionally biased toward low complexity: residues 205–216 (GSGSETLSRSSS) and 279–305 (GSAT…DVAP). Substrate-binding positions include Thr-573, 588 to 589 (SC), Gly-619, 798 to 802 (NLCTE), and 975 to 979 (PTAAS). Cys-589 and Cys-815 are oxidised to a cystine. The active-site Proton acceptor is Asn-798. Cys-800 serves as the catalytic Cysteine radical intermediate. The active-site Proton acceptor is the Glu-802.

It belongs to the ribonucleoside diphosphate reductase large chain family. As to quaternary structure, heterotetramer composed of a homodimer of the large subunit (R1) and a homodimer of the small subunit (R2). Larger multisubunit protein complex are also active, composed of (R1)n(R2)n. May self-assemble (via RIP homotypic interaction motif/RHIM) into homomeric fibrillar amyloid structures. Interacts (via RHIM) with human RIPK1 (via RHIM). Interacts (via RHIM) with human RIPK3 (via RHIM). May interact (via RHIM) with human ZBP1 (via RHIM). Interacts (via C-terminus) with host CASP8.

The catalysed reaction is a 2'-deoxyribonucleoside 5'-diphosphate + [thioredoxin]-disulfide + H2O = a ribonucleoside 5'-diphosphate + [thioredoxin]-dithiol. Its function is as follows. Ribonucleoside-diphosphate reductase holoenzyme that provides the precursors necessary for viral DNA synthesis. Allows virus growth in non-dividing cells, as well as reactivation from latency in infected hosts. Catalyzes the biosynthesis of deoxyribonucleotides from the corresponding ribonucleotides. The N-terminal region confers antiapoptotic activity in differentiated cells such as neurons and is important for viral reactivation to increase neural survivability. Prevents host necroptosis by targeting host RIPK1 and RIPK3, thereby hampering the formation of necroptotic RIPK1-RIPK3 complexes. May form hetero-amyloid structures with host proteins RIPK3 or ZBP1, thereby preventing RIPK3- and ZBP1-mediated necroptosis. In addition, inhibits extrinsic apoptosis by targeting host CASP8. This chain is Ribonucleoside-diphosphate reductase large subunit, found in Homo sapiens (Human).